The following is a 180-amino-acid chain: Major urinary protein 17 (180 aa).

The signal sequence occupies residues 1–18 (MKMLLLLCLGLTLVCVHA). A disulfide bridge connects residues Cys82 and Cys175.

This sequence belongs to the calycin superfamily. Lipocalin family. Because of their involvement in the coordination of social behavior, Mup proteins are thought to exhibit variable expression depending upon gender, age and status of the studied individuals. Expression may also be strain-specific: in strains C57BL/6J and 129S7, transcriptional support is lacking for Mup17.

The protein localises to the secreted. In terms of biological role, major urinary proteins (Mups) bind pheromones, thus stabilize them and allow slow release into the air from urine marks. May protect pheromones from oxidation. May also act as pheromones themselves. In this context, they play a role in the regulation of social behaviors, such as aggression, mating, pup-suckling, territory establishment and dominance. This is Major urinary protein 17 (Mup17) from Mus musculus (Mouse).